Reading from the N-terminus, the 492-residue chain is Catalase isozyme 1 (492 aa).

Residues histidine 65 and asparagine 138 contribute to the active site. Tyrosine 348 contributes to the heme binding site.

Belongs to the catalase family. Homotetramer. It depends on heme as a cofactor. High expression in seeds and early seedlings.

It localises to the glyoxysome. The enzyme catalyses 2 H2O2 = O2 + 2 H2O. Functionally, occurs in almost all aerobically respiring organisms and serves to protect cells from the toxic effects of hydrogen peroxide. In Cucurbita pepo (Vegetable marrow), this protein is Catalase isozyme 1 (CAT1).